The following is a 295-amino-acid chain: Acetylglutamate kinase (295 aa).

Residues Gly-66–Gly-67, Arg-88, and Asn-193 contribute to the substrate site.

The protein belongs to the acetylglutamate kinase family. ArgB subfamily.

Its subcellular location is the cytoplasm. It carries out the reaction N-acetyl-L-glutamate + ATP = N-acetyl-L-glutamyl 5-phosphate + ADP. It participates in amino-acid biosynthesis; L-arginine biosynthesis; N(2)-acetyl-L-ornithine from L-glutamate: step 2/4. Its function is as follows. Catalyzes the ATP-dependent phosphorylation of N-acetyl-L-glutamate. The protein is Acetylglutamate kinase of Sinorhizobium medicae (strain WSM419) (Ensifer medicae).